The chain runs to 306 residues: UDP-3-O-acyl-N-acetylglucosamine deacetylase (306 aa).

Zn(2+) is bound by residues histidine 79, histidine 238, and aspartate 242. Histidine 265 functions as the Proton donor in the catalytic mechanism.

This sequence belongs to the LpxC family. The cofactor is Zn(2+).

The catalysed reaction is a UDP-3-O-[(3R)-3-hydroxyacyl]-N-acetyl-alpha-D-glucosamine + H2O = a UDP-3-O-[(3R)-3-hydroxyacyl]-alpha-D-glucosamine + acetate. It participates in glycolipid biosynthesis; lipid IV(A) biosynthesis; lipid IV(A) from (3R)-3-hydroxytetradecanoyl-[acyl-carrier-protein] and UDP-N-acetyl-alpha-D-glucosamine: step 2/6. In terms of biological role, catalyzes the hydrolysis of UDP-3-O-myristoyl-N-acetylglucosamine to form UDP-3-O-myristoylglucosamine and acetate, the committed step in lipid A biosynthesis. This is UDP-3-O-acyl-N-acetylglucosamine deacetylase from Shewanella piezotolerans (strain WP3 / JCM 13877).